Here is a 136-residue protein sequence, read N- to C-terminus: Large ribosomal subunit protein bL20 (136 aa).

It belongs to the bacterial ribosomal protein bL20 family.

Functionally, binds directly to 23S ribosomal RNA and is necessary for the in vitro assembly process of the 50S ribosomal subunit. It is not involved in the protein synthesizing functions of that subunit. This is Large ribosomal subunit protein bL20 from Tropheryma whipplei (strain TW08/27) (Whipple's bacillus).